The following is a 260-amino-acid chain: Malonyl-[acyl-carrier protein] O-methyltransferase (260 aa).

Belongs to the methyltransferase superfamily.

The catalysed reaction is malonyl-[ACP] + S-adenosyl-L-methionine = malonyl-[ACP] methyl ester + S-adenosyl-L-homocysteine. It functions in the pathway cofactor biosynthesis; biotin biosynthesis. Converts the free carboxyl group of a malonyl-thioester to its methyl ester by transfer of a methyl group from S-adenosyl-L-methionine (SAM). It allows to synthesize pimeloyl-ACP via the fatty acid synthetic pathway. The protein is Malonyl-[acyl-carrier protein] O-methyltransferase of Haemophilus influenzae (strain ATCC 51907 / DSM 11121 / KW20 / Rd).